The primary structure comprises 388 residues: Yellow-related salivary protein SP03 (388 aa).

An N-terminal signal peptide occupies residues 1–18; it reads MKIFLCLIAVVSLQGVLA. N-linked (GlcNAc...) asparagine glycosylation is present at Asn-29.

Belongs to the major royal jelly protein family. As to expression, female salivary gland (at protein level).

The protein resides in the secreted. In terms of biological role, probably modulates blood feeding of sand flies on vertebrate species by binding and sequestering different mediators involved in the host response. Binds biogenic amines. Binds noradrenaline with medium affinity. Binds octopamine with low affinity. Poorly binds histamine, adrenaline and serotonin. The polypeptide is Yellow-related salivary protein SP03 (Phlebotomus perniciosus (Phlebotomine sand fly)).